We begin with the raw amino-acid sequence, 361 residues long: Alanine racemase (361 aa).

K34 serves as the catalytic Proton acceptor; specific for D-alanine. An N6-(pyridoxal phosphate)lysine modification is found at K34. R129 contacts substrate. Y256 (proton acceptor; specific for L-alanine) is an active-site residue. M304 is a binding site for substrate.

It belongs to the alanine racemase family. In terms of assembly, homodimer. It depends on pyridoxal 5'-phosphate as a cofactor.

The catalysed reaction is L-alanine = D-alanine. Its pathway is amino-acid biosynthesis; D-alanine biosynthesis; D-alanine from L-alanine: step 1/1. Functionally, catalyzes the interconversion of L-alanine and D-alanine. May also act on other amino acids. The sequence is that of Alanine racemase (alr) from Corynebacterium glutamicum (strain ATCC 13032 / DSM 20300 / JCM 1318 / BCRC 11384 / CCUG 27702 / LMG 3730 / NBRC 12168 / NCIMB 10025 / NRRL B-2784 / 534).